The primary structure comprises 660 residues: Bifunctional polymyxin resistance protein ArnA (660 aa).

Residues 1-304 (MKTVVFAYHD…TLGLVQGSRL (304 aa)) form a formyltransferase ArnAFT region. 86 to 88 (HLI) contacts (6R)-10-formyltetrahydrofolate. Catalysis depends on H104, which acts as the Proton donor; for formyltransferase activity. Residues R114 and 136–140 (VTRAD) contribute to the (6R)-10-formyltetrahydrofolate site. Positions 314-660 (RRTRVLILGV…RTVDLTDKPS (347 aa)) are dehydrogenase ArnADH. Residues D347 and 368-369 (DI) each bind NAD(+). Residues A393, Y398, and 432 to 433 (TS) contribute to the UDP-alpha-D-glucuronate site. Residue E434 is the Proton acceptor; for decarboxylase activity of the active site. UDP-alpha-D-glucuronate contacts are provided by residues R460, N492, 526-535 (KLIDGGKQKR), and Y613. The Proton donor; for decarboxylase activity role is filled by R619.

It in the N-terminal section; belongs to the Fmt family. UDP-L-Ara4N formyltransferase subfamily. In the C-terminal section; belongs to the NAD(P)-dependent epimerase/dehydratase family. UDP-glucuronic acid decarboxylase subfamily. In terms of assembly, homohexamer, formed by a dimer of trimers.

It catalyses the reaction UDP-alpha-D-glucuronate + NAD(+) = UDP-beta-L-threo-pentopyranos-4-ulose + CO2 + NADH. The catalysed reaction is UDP-4-amino-4-deoxy-beta-L-arabinose + (6R)-10-formyltetrahydrofolate = UDP-4-deoxy-4-formamido-beta-L-arabinose + (6S)-5,6,7,8-tetrahydrofolate + H(+). It functions in the pathway nucleotide-sugar biosynthesis; UDP-4-deoxy-4-formamido-beta-L-arabinose biosynthesis; UDP-4-deoxy-4-formamido-beta-L-arabinose from UDP-alpha-D-glucuronate: step 1/3. Its pathway is nucleotide-sugar biosynthesis; UDP-4-deoxy-4-formamido-beta-L-arabinose biosynthesis; UDP-4-deoxy-4-formamido-beta-L-arabinose from UDP-alpha-D-glucuronate: step 3/3. It participates in bacterial outer membrane biogenesis; lipopolysaccharide biosynthesis. In terms of biological role, bifunctional enzyme that catalyzes the oxidative decarboxylation of UDP-glucuronic acid (UDP-GlcUA) to UDP-4-keto-arabinose (UDP-Ara4O) and the addition of a formyl group to UDP-4-amino-4-deoxy-L-arabinose (UDP-L-Ara4N) to form UDP-L-4-formamido-arabinose (UDP-L-Ara4FN). The modified arabinose is attached to lipid A and is required for resistance to polymyxin and cationic antimicrobial peptides. In Shigella dysenteriae serotype 1 (strain Sd197), this protein is Bifunctional polymyxin resistance protein ArnA.